The following is a 658-amino-acid chain: Integrator complex subunit 9 (658 aa).

The 1D-myo-inositol hexakisphosphate site is built by K2 and F19. K58 is covalently cross-linked (Glycyl lysine isopeptide (Lys-Gly) (interchain with G-Cter in SUMO2)). Positions 510 and 511 each coordinate 1D-myo-inositol hexakisphosphate. The segment at D548–D574 is disordered. The short motif at K566–R570 is the Nuclear localization signal element.

It belongs to the metallo-beta-lactamase superfamily. RNA-metabolizing metallo-beta-lactamase-like family. INTS9 subfamily. As to quaternary structure, component of the Integrator complex, composed of core subunits INTS1, INTS2, INTS3, INTS4, INTS5, INTS6, INTS7, INTS8, INTS9/RC74, INTS10, INTS11/CPSF3L, INTS12, INTS13, INTS14 and INTS15. The core complex associates with protein phosphatase 2A subunits PPP2CA and PPP2R1A, to form the Integrator-PP2A (INTAC) complex. INTS9 is part of the RNA endonuclease subcomplex, composed of INTS4, INTS9, INTS11 and inositol hexakisphosphate (InsP6). Interacts with WDR73; interaction is required for the assembly of the RNA endonuclease subcomplex in the cytoplasm. Interacts with BRAT1; interaction is required for the assembly of the RNA endonuclease subcomplex. Interacts with ESRRB, ESRRB is not a core component of the Integrator complex and this association is a bridge for the interaction with the multiprotein complex Integrator; attracts the transcriptional machinery.

It is found in the nucleus. It localises to the cytoplasm. Its function is as follows. Component of the integrator complex, a multiprotein complex that terminates RNA polymerase II (Pol II) transcription in the promoter-proximal region of genes. The integrator complex provides a quality checkpoint during transcription elongation by driving premature transcription termination of transcripts that are unfavorably configured for transcriptional elongation: the complex terminates transcription by (1) catalyzing dephosphorylation of the C-terminal domain (CTD) of Pol II subunit POLR2A/RPB1 and SUPT5H/SPT5, (2) degrading the exiting nascent RNA transcript via endonuclease activity and (3) promoting the release of Pol II from bound DNA. The integrator complex is also involved in terminating the synthesis of non-coding Pol II transcripts, such as enhancer RNAs (eRNAs), small nuclear RNAs (snRNAs), telomerase RNAs and long non-coding RNAs (lncRNAs). Mediates recruitment of cytoplasmic dynein to the nuclear envelope, probably as component of the integrator complex. This chain is Integrator complex subunit 9, found in Homo sapiens (Human).